We begin with the raw amino-acid sequence, 468 residues long: Glutamate--tRNA ligase (468 aa).

The 'HIGH' region motif lies at 14-24; the sequence is PSPTGFIHLGN. The 'KMSKS' region signature appears at 246–250; sequence KMSKR. Lys249 is a binding site for ATP.

This sequence belongs to the class-I aminoacyl-tRNA synthetase family. Glutamate--tRNA ligase type 1 subfamily. Monomer.

Its subcellular location is the cytoplasm. The catalysed reaction is tRNA(Glu) + L-glutamate + ATP = L-glutamyl-tRNA(Glu) + AMP + diphosphate. Functionally, catalyzes the attachment of glutamate to tRNA(Glu) in a two-step reaction: glutamate is first activated by ATP to form Glu-AMP and then transferred to the acceptor end of tRNA(Glu). The protein is Glutamate--tRNA ligase of Leptothrix cholodnii (strain ATCC 51168 / LMG 8142 / SP-6) (Leptothrix discophora (strain SP-6)).